The following is a 506-amino-acid chain: Mitogen-activated protein kinase 13 (506 aa).

A Protein kinase domain is found at 13-304 (YQIQEVVGKG…AEEALADPYF (292 aa)). ATP is bound by residues 19 to 27 (VGKGSYGVV) and lysine 42. Aspartate 139 (proton acceptor) is an active-site residue. Threonine 175 carries the phosphothreonine modification. The TXY signature appears at 175-177 (TDY). Tyrosine 177 is modified (phosphotyrosine). The interval 384-421 (YSRGERSTPLRRQHASLPRERVCSSVDSNNQDSDNEER) is disordered.

It belongs to the protein kinase superfamily. CMGC Ser/Thr protein kinase family. MAP kinase subfamily. Dually phosphorylated on Thr-175 and Tyr-177, which activates the enzyme.

It carries out the reaction L-seryl-[protein] + ATP = O-phospho-L-seryl-[protein] + ADP + H(+). It catalyses the reaction L-threonyl-[protein] + ATP = O-phospho-L-threonyl-[protein] + ADP + H(+). Its activity is regulated as follows. Activated by threonine and tyrosine phosphorylation. This Oryza sativa subsp. indica (Rice) protein is Mitogen-activated protein kinase 13 (MPK13).